Consider the following 210-residue polypeptide: Protein GET1 (210 aa).

Residues 1–4 (MPSL) are Lumenal-facing. A helical transmembrane segment spans residues 5–24 (LIIVLIIHVVTYLINTIGAN). Residues 25-110 (TIDSLLWLLY…SFDLAVKSIR (86 aa)) lie on the Cytoplasmic side of the membrane. The stretch at 39–95 (NQTSQTANEQRRLKREVMQLKREMNATSSQDEFAKWAKLRRRHDKTMEEYEAKNKAL) forms a coiled coil. A helical transmembrane segment spans residues 111 to 131 (FFSTTGLKLFLQFWCSKTPIF). Residues 132–155 (ELPRGWIPWQVEWVLSFPRAPLGT) are Lumenal-facing. The chain crosses the membrane as a helical span at residues 156–172 (VSIQIWGGVCATVVSLA). Residues 173–210 (GDAIGVVNVYLTSKAPKQKEPATSGENSARPMAIKKEL) are Cytoplasmic-facing. A disordered region spans residues 189–210 (KQKEPATSGENSARPMAIKKEL).

The protein belongs to the WRB/GET1 family. In terms of assembly, interacts with GET3.

The protein localises to the endoplasmic reticulum membrane. In terms of biological role, required for the post-translational delivery of tail-anchored (TA) proteins to the endoplasmic reticulum. Acts as a membrane receptor for soluble GET3, which recognizes and selectively binds the transmembrane domain of TA proteins in the cytosol. In Coccidioides immitis (strain RS) (Valley fever fungus), this protein is Protein GET1.